The chain runs to 431 residues: tRNA-2-methylthio-N(6)-dimethylallyladenosine synthase (431 aa).

The region spanning 2-117 (KKLFIETLGC…ITEVVDKKHA (116 aa)) is the MTTase N-terminal domain. Positions 11, 48, 80, 149, 153, and 156 each coordinate [4Fe-4S] cluster. One can recognise a Radical SAM core domain in the interval 135-368 (RTNPFKAMVN…QTRHTEILDE (234 aa)). The region spanning 371–431 (DAQLGKVHEV…SRGALDGVLV (61 aa)) is the TRAM domain.

It belongs to the methylthiotransferase family. MiaB subfamily. As to quaternary structure, monomer. Requires [4Fe-4S] cluster as cofactor.

The protein localises to the cytoplasm. It catalyses the reaction N(6)-dimethylallyladenosine(37) in tRNA + (sulfur carrier)-SH + AH2 + 2 S-adenosyl-L-methionine = 2-methylsulfanyl-N(6)-dimethylallyladenosine(37) in tRNA + (sulfur carrier)-H + 5'-deoxyadenosine + L-methionine + A + S-adenosyl-L-homocysteine + 2 H(+). In terms of biological role, catalyzes the methylthiolation of N6-(dimethylallyl)adenosine (i(6)A), leading to the formation of 2-methylthio-N6-(dimethylallyl)adenosine (ms(2)i(6)A) at position 37 in tRNAs that read codons beginning with uridine. The sequence is that of tRNA-2-methylthio-N(6)-dimethylallyladenosine synthase from Sulfurovum sp. (strain NBC37-1).